A 496-amino-acid chain; its full sequence is Nucleolar and spindle-associated protein 1-B (496 aa).

Disordered stretches follow at residues 44-206 (YPES…HEAH), 250-294 (TPVS…STAN), and 338-496 (KSSS…VPVK). Residues 56-69 (GCTSLTDTDELNSS) show a composition bias toward polar residues. Basic and acidic residues predominate over residues 121–134 (TQDKDCLESKKKEV). Polar residues predominate over residues 150–159 (QDTSKQNNSE). A compositionally biased stretch (low complexity) spans 261-281 (SRLSLLSPLPRTTGASPSRTP). Polar residues-rich tracts occupy residues 376-396 (NTTI…NKAN) and 403-423 (AQNT…QASL). Low complexity predominate over residues 447–459 (SGSNSNVSVLKNN). Over residues 467–485 (TREERRKQHELDRKGKRDQ) the composition is skewed to basic and acidic residues.

The protein belongs to the NUSAP family. As to quaternary structure, interacts with DNA, microtubules, ipo7, kpna2 and kpnb1. Microtubule stabilization is inhibited by ipo7 and kpna2, while microtubule bundling is inhibited by kpnb1. Active GTP-bound ran causes dissociation of ipo7 and kpnb1.

Its subcellular location is the cytoplasm. The protein localises to the nucleus. It is found in the cytoskeleton. The protein resides in the spindle. Its function is as follows. Microtubule-associated protein with the capacity to bundle and stabilize microtubules. May associate with chromosomes and promote the organization of meiotic or mitotic spindle microtubules around them. In Xenopus laevis (African clawed frog), this protein is Nucleolar and spindle-associated protein 1-B (nusap1-b).